A 31-amino-acid polypeptide reads, in one-letter code: Circulin-B (31 aa).

Positions Gly1 to Asn31 form a cross-link, cyclopeptide (Gly-Asn). 3 disulfide bridges follow: Cys5-Cys21, Cys9-Cys23, and Cys14-Cys28.

In terms of processing, this is a cyclic peptide.

Functionally, probably participates in a plant defense mechanism. Has antibiotic activity. Inhibits the cytopathic effects and replication of the human immunodeficiency virus. Active against both Gram-positive and Gram-negative bacteria. The sequence is that of Circulin-B from Chassalia parviflora.